Here is a 78-residue protein sequence, read N- to C-terminus: UPF0349 protein SAHV_0934 (78 aa).

It belongs to the UPF0349 family.

This is UPF0349 protein SAHV_0934 from Staphylococcus aureus (strain Mu3 / ATCC 700698).